A 92-amino-acid polypeptide reads, in one-letter code: Small ribosomal subunit protein uS19 (92 aa).

This sequence belongs to the universal ribosomal protein uS19 family.

Functionally, protein S19 forms a complex with S13 that binds strongly to the 16S ribosomal RNA. The protein is Small ribosomal subunit protein uS19 of Rickettsia bellii (strain OSU 85-389).